Reading from the N-terminus, the 780-residue chain is Acetyl-CoA decarbonylase/synthase complex subunit alpha (780 aa).

Positions 73, 76, 77, 79, 84, and 93 each coordinate [4Fe-4S] cluster. H116 serves as a coordination point for CO. [Ni-4Fe-4S] cluster is bound by residues H250, C278, and C317. 4Fe-4S ferredoxin-type domains follow at residues 399-429 (IDEI…MDAV) and 440-469 (LEEM…VSMV). Residues C409, C412, C415, C419, C449, C452, C455, and C459 each coordinate [4Fe-4S] cluster. Residues C517, C546, and C581 each contribute to the [Ni-4Fe-4S] cluster site.

It belongs to the Ni-containing carbon monoxide dehydrogenase family. In terms of assembly, heterotetramer of two alpha and two epsilon subunits. The ACDS complex is made up of alpha, epsilon, beta, gamma and delta subunits with a probable stoichiometry of (alpha(2)epsilon(2))(4)-beta(8)-(gamma(1)delta(1))(8). Requires [4Fe-4S] cluster as cofactor. [Ni-4Fe-4S] cluster serves as cofactor.

It carries out the reaction CO + 2 oxidized [2Fe-2S]-[ferredoxin] + H2O = 2 reduced [2Fe-2S]-[ferredoxin] + CO2 + 2 H(+). Its function is as follows. Part of the ACDS complex that catalyzes the reversible cleavage of acetyl-CoA, allowing autotrophic growth from CO(2). The alpha-epsilon subcomponent functions as a carbon monoxide dehydrogenase. In Methanothermobacter thermautotrophicus (strain ATCC 29096 / DSM 1053 / JCM 10044 / NBRC 100330 / Delta H) (Methanobacterium thermoautotrophicum), this protein is Acetyl-CoA decarbonylase/synthase complex subunit alpha.